Reading from the N-terminus, the 1111-residue chain is Serine/threonine-protein kinase Nek10 (1111 aa).

A compositionally biased stretch (basic and acidic residues) spans 1–16 (MPDQDTKAKSTEKTAD). Disordered regions lie at residues 1–24 (MPDQ…TTTR) and 47–72 (AINF…HRAR). Residues 47–63 (AINFDSAQNNMTKSEPT) are compositionally biased toward polar residues. Positions 481-514 (YKDLVSQLNLLLEDELKQIAENIESINQKKAPLK) form a coiled coil. Residues 519–791 (YAVLDHLGSG…MISDVMMKYL (273 aa)) form the Protein kinase domain. Residues 525 to 533 (LGSGAFGCV) and K548 contribute to the ATP site. D655 (proton acceptor) is an active-site residue.

The protein belongs to the protein kinase superfamily. NEK Ser/Thr protein kinase family. NIMA subfamily. Interacts with RAF1 and MAP2K1; the interaction is direct with RAF1 and required for ERK1/2-signaling pathway activation in response to UV irradiation. The cofactor is Mg(2+). Expressed in the mammary gland, lung, spleen, and kidney.

The enzyme catalyses L-seryl-[protein] + ATP = O-phospho-L-seryl-[protein] + ADP + H(+). It catalyses the reaction L-threonyl-[protein] + ATP = O-phospho-L-threonyl-[protein] + ADP + H(+). Its function is as follows. Plays a role in the cellular response to UV irradiation. Mediates G2/M cell cycle arrest, MEK autoactivation and ERK1/2-signaling pathway activation in response to UV irradiation. In ciliated cells, it is involved in the regulation of mucociliary transport. This Mus musculus (Mouse) protein is Serine/threonine-protein kinase Nek10.